Here is a 458-residue protein sequence, read N- to C-terminus: MGRTPELKLYNTLTREKSAFKPIDAENVRMYVCGPTVYDFAHIGNARPVIVFDVLFRLLRHVYGEDHVTYARNITDVDDKINARALRDHPGLPLNEAIRAVTEKTETQFHADVAELGCLEPSVEPRATDNIAEMIQIIEKLIGNGHAYVAAGEVLFDTKSMADYGELSKRPLDEQQAGARVAVDAHKKNPGDFVLWKLSSHNEPGWESPWGRGRPGWHIECSAMSRRYLGDIFDIHGGGLDLIFPHHENEIAQSRCAHGTEVMANVWMHNGFVQVEGRKMSKSEGNFVTIHDLLHTETFGGRKWPGEVLRLAMLMTHYREPIDFSIKRLEEAERLLAKWPTAEAGDAAPDESVLNALADDLNTVAAVQALHALAQPGNDAVFAASAVLLGVLPKKVEIDEAFAAAVDALVAMRLEVLKAKNFVEADRIRDELGAKGIQLKDGKDPETGERVTTWEVKR.

C33 contributes to the Zn(2+) binding site. The short motif at P35–N45 is the 'HIGH' region element. Zn(2+) is bound by residues C221, H246, and E250. A 'KMSKS' region motif is present at residues K279–S283. K282 contributes to the ATP binding site.

The protein belongs to the class-I aminoacyl-tRNA synthetase family. As to quaternary structure, monomer. Zn(2+) serves as cofactor.

Its subcellular location is the cytoplasm. It catalyses the reaction tRNA(Cys) + L-cysteine + ATP = L-cysteinyl-tRNA(Cys) + AMP + diphosphate. This is Cysteine--tRNA ligase from Rhizobium etli (strain ATCC 51251 / DSM 11541 / JCM 21823 / NBRC 15573 / CFN 42).